The following is a 740-amino-acid chain: Catalase-peroxidase (740 aa).

Positions 1–14 are enriched in basic and acidic residues; that stretch reads MTENHDAIVTDAKS. The disordered stretch occupies residues 1-21; the sequence is MTENHDAIVTDAKSEGSGGCP. Residues 108–231 constitute a cross-link (tryptophyl-tyrosyl-methioninium (Trp-Tyr) (with M-257)); that stretch reads WHSAGTYRIS…LGAVQMGLIY (124 aa). The Proton acceptor role is filled by His109. Positions 231-257 form a cross-link, tryptophyl-tyrosyl-methioninium (Tyr-Met) (with W-108); sequence YVNPEGPNGNPDPIAAARDIRETFRRM. Heme b is bound at residue His272.

This sequence belongs to the peroxidase family. Peroxidase/catalase subfamily. Homodimer. It depends on heme b as a cofactor. Post-translationally, formation of the three residue Trp-Tyr-Met cross-link is important for the catalase, but not the peroxidase activity of the enzyme.

It carries out the reaction H2O2 + AH2 = A + 2 H2O. The catalysed reaction is 2 H2O2 = O2 + 2 H2O. Its function is as follows. Bifunctional enzyme with both catalase and broad-spectrum peroxidase activity. The protein is Catalase-peroxidase of Streptomyces reticuli.